The sequence spans 70 residues: Large ribosomal subunit protein bL31 (70 aa).

Cys-16, Cys-18, Cys-37, and Cys-40 together coordinate Zn(2+).

Belongs to the bacterial ribosomal protein bL31 family. Type A subfamily. In terms of assembly, part of the 50S ribosomal subunit. Zn(2+) serves as cofactor.

Its function is as follows. Binds the 23S rRNA. In Klebsiella pneumoniae (strain 342), this protein is Large ribosomal subunit protein bL31.